The primary structure comprises 104 residues: Pole-localizer protein TmaR (104 aa).

2 coiled-coil regions span residues 13-43 (RKNK…NLLD) and 76-96 (SAEI…LTEE).

It belongs to the pole-localizer TmaR family.

Its subcellular location is the cytoplasm. Pole-localizer protein involved in the regulation of several cellular processes. This is Pole-localizer protein TmaR from Vibrio vulnificus (strain CMCP6).